We begin with the raw amino-acid sequence, 271 residues long: Formamidopyrimidine-DNA glycosylase (271 aa).

Pro-2 (schiff-base intermediate with DNA) is an active-site residue. The active-site Proton donor is the Glu-3. Lys-58 acts as the Proton donor; for beta-elimination activity in catalysis. Residues Arg-110 and Arg-152 each coordinate DNA. An FPG-type zinc finger spans residues 237-271 (AVYGQTGKPCTVCGTPIARIRLGNRSTWFCPVCQK). The Proton donor; for delta-elimination activity role is filled by Arg-261.

Belongs to the FPG family. Monomer. The cofactor is Zn(2+).

The catalysed reaction is Hydrolysis of DNA containing ring-opened 7-methylguanine residues, releasing 2,6-diamino-4-hydroxy-5-(N-methyl)formamidopyrimidine.. The enzyme catalyses 2'-deoxyribonucleotide-(2'-deoxyribose 5'-phosphate)-2'-deoxyribonucleotide-DNA = a 3'-end 2'-deoxyribonucleotide-(2,3-dehydro-2,3-deoxyribose 5'-phosphate)-DNA + a 5'-end 5'-phospho-2'-deoxyribonucleoside-DNA + H(+). Functionally, involved in base excision repair of DNA damaged by oxidation or by mutagenic agents. Acts as a DNA glycosylase that recognizes and removes damaged bases. Has a preference for oxidized purines, such as 7,8-dihydro-8-oxoguanine (8-oxoG). Has AP (apurinic/apyrimidinic) lyase activity and introduces nicks in the DNA strand. Cleaves the DNA backbone by beta-delta elimination to generate a single-strand break at the site of the removed base with both 3'- and 5'-phosphates. The polypeptide is Formamidopyrimidine-DNA glycosylase (Geobacter sulfurreducens (strain ATCC 51573 / DSM 12127 / PCA)).